Consider the following 332-residue polypeptide: Protein EXORDIUM-like 6 (332 aa).

Residues 1-27 (MAMASASSSSSSISVIIFLLLAPLCLS) form the signal peptide. N-linked (GlcNAc...) asparagine glycans are attached at residues Asn36, Asn102, and Asn143.

This sequence belongs to the EXORDIUM family.

The protein resides in the secreted. Its subcellular location is the extracellular space. It localises to the apoplast. In terms of biological role, may play a role in a brassinosteroid-dependent regulation of growth and development. This is Protein EXORDIUM-like 6 (EXL6) from Arabidopsis thaliana (Mouse-ear cress).